Consider the following 264-residue polypeptide: Thiazole synthase (264 aa).

Lysine 106 serves as the catalytic Schiff-base intermediate with DXP. Residues glycine 167, 193-194 (AG), and 215-216 (NT) each bind 1-deoxy-D-xylulose 5-phosphate.

It belongs to the ThiG family. Homotetramer. Forms heterodimers with either ThiH or ThiS.

It localises to the cytoplasm. The enzyme catalyses [ThiS sulfur-carrier protein]-C-terminal-Gly-aminoethanethioate + 2-iminoacetate + 1-deoxy-D-xylulose 5-phosphate = [ThiS sulfur-carrier protein]-C-terminal Gly-Gly + 2-[(2R,5Z)-2-carboxy-4-methylthiazol-5(2H)-ylidene]ethyl phosphate + 2 H2O + H(+). It functions in the pathway cofactor biosynthesis; thiamine diphosphate biosynthesis. Its function is as follows. Catalyzes the rearrangement of 1-deoxy-D-xylulose 5-phosphate (DXP) to produce the thiazole phosphate moiety of thiamine. Sulfur is provided by the thiocarboxylate moiety of the carrier protein ThiS. In vitro, sulfur can be provided by H(2)S. This Xanthomonas oryzae pv. oryzae (strain MAFF 311018) protein is Thiazole synthase.